The following is a 199-amino-acid chain: Imidazoleglycerol-phosphate dehydratase (199 aa).

Belongs to the imidazoleglycerol-phosphate dehydratase family.

The protein localises to the cytoplasm. The catalysed reaction is D-erythro-1-(imidazol-4-yl)glycerol 3-phosphate = 3-(imidazol-4-yl)-2-oxopropyl phosphate + H2O. The protein operates within amino-acid biosynthesis; L-histidine biosynthesis; L-histidine from 5-phospho-alpha-D-ribose 1-diphosphate: step 6/9. The protein is Imidazoleglycerol-phosphate dehydratase of Bifidobacterium longum (strain NCC 2705).